The following is a 339-amino-acid chain: Replication factor C subunit 5 (339 aa).

59–66 (GPPGTGKT) provides a ligand contact to ATP.

Belongs to the activator 1 small subunits family. As to quaternary structure, subunit of the RFC complex, an heteropentameric complex consisting of a large subunit RFC1 and four small subunits RFC2, RFC3, RFC4 and RFC5; the RFC complex interacts with PCNA. Forms an heterotetrameric complex with RFC2, RFC3 and RFC4; this complex has ATPase activity but is not stimulated by PCNA. The heterotetramer of subunits RFC2, RFC3, RFC4 and RFC5 interacts with RAD17.

Its subcellular location is the nucleus. Its function is as follows. Subunit of the replication factor C (RFC) complex which acts during elongation of primed DNA templates by DNA polymerases delta and epsilon, and is necessary for ATP-dependent loading of proliferating cell nuclear antigen (PCNA) onto primed DNA. In Mus musculus (Mouse), this protein is Replication factor C subunit 5 (Rfc5).